Consider the following 190-residue polypeptide: Putative glutathione-dependent formaldehyde-activating enzyme (190 aa).

A CENP-V/GFA domain is found at 19-165 (FKGGKLYCHC…FRKVGLQPYD (147 aa)). Zn(2+) is bound by residues C26, C28, C47, C49, C52, C94, and C97.

Belongs to the Gfa family. The cofactor is Zn(2+).

It catalyses the reaction S-(hydroxymethyl)glutathione = glutathione + formaldehyde. The protein operates within one-carbon metabolism; formaldehyde degradation; formate from formaldehyde (glutathione route): step 1/3. Functionally, catalyzes the condensation of formaldehyde and glutathione to S-hydroxymethylglutathione. The sequence is that of Putative glutathione-dependent formaldehyde-activating enzyme from Pyrenophora teres f. teres (strain 0-1) (Barley net blotch fungus).